The chain runs to 114 residues: uncharacterized protein (114 aa).

The protein to E.coli YggL.

This is an uncharacterized protein from Haemophilus influenzae (strain ATCC 51907 / DSM 11121 / KW20 / Rd).